An 834-amino-acid polypeptide reads, in one-letter code: ATP-dependent DNA helicase fml1 (834 aa).

Residues 80–248 (IVQKALFENV…NVIDSLHISR (169 aa)) form the Helicase ATP-binding domain. 93–100 (LPTGLGKT) provides a ligand contact to ATP. The short motif at 196-199 (DEAH) is the DEAH box element. Residues 416 to 582 (HLERIVTEYF…GLSLSEKSYR (167 aa)) form the Helicase C-terminal domain. An interaction with MHF complex region spans residues 650 to 690 (EESPFEICPVTYSIEQEKKLEKYKRVCLRGLDIHRNRRLSQ). The tract at residues 738 to 769 (NSTDRDTKQPKMHDFRQPLHPNPMTTLKRKGQ) is disordered. Basic and acidic residues predominate over residues 740-754 (TDRDTKQPKMHDFRQ).

The protein belongs to the DEAD box helicase family. DEAH subfamily. FANCM sub-subfamily.

Its subcellular location is the cytoplasm. The protein resides in the nucleus. It localises to the nucleolus. The catalysed reaction is ATP + H2O = ADP + phosphate + H(+). ATP-dependent DNA helicase involved in DNA damage repair by homologous recombination and in genome maintenance. Capable of unwinding D-loops. Plays a role in limiting crossover recombination during mitotic DNA double-strand break (DSB) repair. Component of a FANCM-MHF complex which promotes gene conversion at blocked replication forks, probably by reversal of the stalled fork. FANCM-MHF also promotes non-crossover recombination in meiotic cells. This Schizosaccharomyces pombe (strain 972 / ATCC 24843) (Fission yeast) protein is ATP-dependent DNA helicase fml1.